The following is a 1106-amino-acid chain: Platelet-derived growth factor receptor beta (1106 aa).

Positions 1-32 (MRLPGAMPALALKGELLLLSLLLLLEPQISQG) are cleaved as a signal peptide. Ig-like C2-type domains lie at 33–120 (LVVT…YIFV), 129–210 (PNDA…YRLQ), 214–309 (INVS…INIT), 331–403 (HRSR…HEDA), and 416–524 (PVRV…VIVV). Over 33 to 532 (LVVTPPGPEL…VVPHSLPFKV (500 aa)) the chain is Extracellular. Asparagine 45, asparagine 89, and asparagine 103 each carry an N-linked (GlcNAc...) asparagine glycan. Residues cysteine 54 and cysteine 100 are joined by a disulfide bond. Residues cysteine 149 and cysteine 190 are joined by a disulfide bond. 2 N-linked (GlcNAc...) asparagine glycosylation sites follow: asparagine 215 and asparagine 230. A disulfide bond links cysteine 235 and cysteine 291. 6 N-linked (GlcNAc...) asparagine glycosylation sites follow: asparagine 292, asparagine 307, asparagine 354, asparagine 371, asparagine 468, and asparagine 479. An intrachain disulfide couples cysteine 436 to cysteine 508. Residues 533–553 (VVISAILALVVLTIISLIILI) form a helical membrane-spanning segment. Residues 554–1106 (MLWQKKPRYE…PRAEAEDSFL (553 aa)) lie on the Cytoplasmic side of the membrane. A phosphotyrosine; by autocatalysis mark is found at tyrosine 562, tyrosine 579, and tyrosine 581. The Protein kinase domain maps to 600–962 (LVLGRTLGSG…QLVLLLERLL (363 aa)). ATP-binding positions include 606-614 (LGSGAFGQV) and lysine 634. Residue tyrosine 686 is modified to Phosphotyrosine; by ABL1 and ABL2. Phosphotyrosine; by autocatalysis is present on residues tyrosine 716, tyrosine 740, tyrosine 751, tyrosine 763, tyrosine 771, tyrosine 775, and tyrosine 778. The active-site Proton acceptor is aspartate 826. Tyrosine 857 carries the post-translational modification Phosphotyrosine; by autocatalysis. Phosphotyrosine; by ABL1 and ABL2 is present on residues tyrosine 934 and tyrosine 970. Phosphotyrosine; by autocatalysis occurs at positions 1009 and 1021. The interval 1019 to 1106 (NDYIIPLPDP…PRAEAEDSFL (88 aa)) is disordered. A compositionally biased stretch (polar residues) spans 1043–1060 (SLASSTLNEVNTSSTISC). The span at 1066 to 1088 (PQDEPEPEPQLELQVEPEPELEQ) shows a compositional bias: acidic residues.

It belongs to the protein kinase superfamily. Tyr protein kinase family. CSF-1/PDGF receptor subfamily. Interacts with homodimeric PDGFB and PDGFD, and with heterodimers formed by PDGFA and PDGFB. May also interact with homodimeric PDGFC. Monomer in the absence of bound ligand. Interaction with homodimeric PDGFB, heterodimers formed by PDGFA and PDGFB or homodimeric PDGFD, leads to receptor dimerization, where both PDGFRA homodimers and heterodimers with PDGFRB are observed. Interacts with SH2B2/APS. Interacts directly (tyrosine phosphorylated) with SHB. Interacts (tyrosine phosphorylated) with PIK3R1 and RASA1. Interacts (tyrosine phosphorylated) with CBL. Interacts (tyrosine phosphorylated) with SRC and SRC family kinases. Interacts (tyrosine phosphorylated) with PIK3C2B, maybe indirectly. Interacts (tyrosine phosphorylated) with SHC1, GRB7, GRB10 and NCK1. Interaction with GRB2 is mediated by SHC1. Interacts (via C-terminus) with NHERF1. Post-translationally, autophosphorylated on tyrosine residues upon ligand binding. Autophosphorylation occurs in trans, i.e. one subunit of the dimeric receptor phosphorylates tyrosine residues on the other subunit. Phosphorylation at Tyr-579, and to a lesser degree, at Tyr-581, is important for interaction with SRC family kinases. Phosphorylation at Tyr-740 and Tyr-751 is important for interaction with PIK3R1. Phosphorylation at Tyr-751 is important for interaction with NCK1. Phosphorylation at Tyr-771 and Tyr-857 is important for interaction with RASA1/GAP. Phosphorylation at Tyr-857 is important for efficient phosphorylation of PLCG1 and PTPN11, resulting in increased phosphorylation of AKT1, MAPK1/ERK2 and/or MAPK3/ERK1, PDCD6IP/ALIX and STAM, and in increased cell proliferation. Phosphorylation at Tyr-1009 is important for interaction with PTPN11. Phosphorylation at Tyr-1009 and Tyr-1021 is important for interaction with PLCG1. Phosphorylation at Tyr-1021 is important for interaction with CBL; PLCG1 and CBL compete for the same binding site. Dephosphorylated by PTPRJ at Tyr-751, Tyr-857, Tyr-1009 and Tyr-1021. Dephosphorylated by PTPN2 at Tyr-579 and Tyr-1021. In terms of processing, N-glycosylated. Ubiquitinated. After autophosphorylation, the receptor is polyubiquitinated, leading to its degradation.

Its subcellular location is the cell membrane. The protein localises to the cytoplasmic vesicle. It is found in the lysosome lumen. The enzyme catalyses L-tyrosyl-[protein] + ATP = O-phospho-L-tyrosyl-[protein] + ADP + H(+). With respect to regulation, present in an inactive conformation in the absence of bound ligand. Binding of PDGFB and/or PDGFD leads to dimerization and activation by autophosphorylation on tyrosine residues. Inhibited by imatinib. Functionally, tyrosine-protein kinase that acts as a cell-surface receptor for homodimeric PDGFB and PDGFD and for heterodimers formed by PDGFA and PDGFB, and plays an essential role in the regulation of embryonic development, cell proliferation, survival, differentiation, chemotaxis and migration. Plays an essential role in blood vessel development by promoting proliferation, migration and recruitment of pericytes and smooth muscle cells to endothelial cells. Plays a role in the migration of vascular smooth muscle cells and the formation of neointima at vascular injury sites. Required for normal development of the cardiovascular system. Required for normal recruitment of pericytes (mesangial cells) in the kidney glomerulus, and for normal formation of a branched network of capillaries in kidney glomeruli. Promotes rearrangement of the actin cytoskeleton and the formation of membrane ruffles. Binding of its cognate ligands - homodimeric PDGFB, heterodimers formed by PDGFA and PDGFB or homodimeric PDGFD -leads to the activation of several signaling cascades; the response depends on the nature of the bound ligand and is modulated by the formation of heterodimers between PDGFRA and PDGFRB. Phosphorylates PLCG1, PIK3R1, PTPN11, RASA1/GAP, CBL, SHC1 and NCK1. Activation of PLCG1 leads to the production of the cellular signaling molecules diacylglycerol and inositol 1,4,5-trisphosphate, mobilization of cytosolic Ca(2+) and the activation of protein kinase C. Phosphorylation of PIK3R1, the regulatory subunit of phosphatidylinositol 3-kinase, leads to the activation of the AKT1 signaling pathway. Phosphorylation of SHC1, or of the C-terminus of PTPN11, creates a binding site for GRB2, resulting in the activation of HRAS, RAF1 and down-stream MAP kinases, including MAPK1/ERK2 and/or MAPK3/ERK1. Promotes phosphorylation and activation of SRC family kinases. Promotes phosphorylation of PDCD6IP/ALIX and STAM. Receptor signaling is down-regulated by protein phosphatases that dephosphorylate the receptor and its down-stream effectors, and by rapid internalization of the activated receptor. In Homo sapiens (Human), this protein is Platelet-derived growth factor receptor beta (PDGFRB).